The sequence spans 215 residues: ATP-dependent Clp protease proteolytic subunit 3 (215 aa).

S119 serves as the catalytic Nucleophile. H144 is a catalytic residue.

Belongs to the peptidase S14 family. In terms of assembly, fourteen ClpP subunits assemble into 2 heptameric rings which stack back to back to give a disk-like structure with a central cavity, resembling the structure of eukaryotic proteasomes.

Its subcellular location is the cytoplasm. It catalyses the reaction Hydrolysis of proteins to small peptides in the presence of ATP and magnesium. alpha-casein is the usual test substrate. In the absence of ATP, only oligopeptides shorter than five residues are hydrolyzed (such as succinyl-Leu-Tyr-|-NHMec, and Leu-Tyr-Leu-|-Tyr-Trp, in which cleavage of the -Tyr-|-Leu- and -Tyr-|-Trp bonds also occurs).. Its function is as follows. Cleaves peptides in various proteins in a process that requires ATP hydrolysis. Has a chymotrypsin-like activity. Plays a major role in the degradation of misfolded proteins. In Prochlorococcus marinus subsp. pastoris (strain CCMP1986 / NIES-2087 / MED4), this protein is ATP-dependent Clp protease proteolytic subunit 3.